We begin with the raw amino-acid sequence, 591 residues long: A-type ATP synthase subunit A (591 aa).

233-240 (GPFGSGKT) is a binding site for ATP.

The protein belongs to the ATPase alpha/beta chains family. In terms of assembly, has multiple subunits with at least A(3), B(3), C, D, E, F, H, I and proteolipid K(x).

The protein localises to the cell membrane. The enzyme catalyses ATP + H2O + 4 H(+)(in) = ADP + phosphate + 5 H(+)(out). Component of the A-type ATP synthase that produces ATP from ADP in the presence of a proton gradient across the membrane. The A chain is the catalytic subunit. This Metallosphaera sedula (strain ATCC 51363 / DSM 5348 / JCM 9185 / NBRC 15509 / TH2) protein is A-type ATP synthase subunit A.